Consider the following 642-residue polypeptide: Threonine--tRNA ligase (642 aa).

Residues 1–61 form the TGS domain; it reads MPVITLPDGS…EHDAQIAIIT (61 aa). The segment at 243 to 534 is catalytic; sequence DHRKIGKQLD…LTEEYAGFYP (292 aa). The Zn(2+) site is built by Cys334, His385, and His511.

It belongs to the class-II aminoacyl-tRNA synthetase family. As to quaternary structure, homodimer. The cofactor is Zn(2+).

The protein localises to the cytoplasm. The enzyme catalyses tRNA(Thr) + L-threonine + ATP = L-threonyl-tRNA(Thr) + AMP + diphosphate + H(+). Catalyzes the attachment of threonine to tRNA(Thr) in a two-step reaction: L-threonine is first activated by ATP to form Thr-AMP and then transferred to the acceptor end of tRNA(Thr). Also edits incorrectly charged L-seryl-tRNA(Thr). In Sodalis glossinidius (strain morsitans), this protein is Threonine--tRNA ligase.